We begin with the raw amino-acid sequence, 462 residues long: Tubulin gamma-1 chain (462 aa).

GTP is bound at residue 142–148; the sequence is AGGTGSG.

This sequence belongs to the tubulin family.

It is found in the cytoplasm. The protein resides in the cytoskeleton. Its subcellular location is the microtubule organizing center. It localises to the centrosome. In terms of biological role, tubulin is the major constituent of microtubules. The gamma chain is found at microtubule organizing centers (MTOC) such as the spindle poles or the centrosome, suggesting that it is involved in the minus-end nucleation of microtubule assembly. The sequence is that of Tubulin gamma-1 chain from Euplotes crassus.